Here is a 333-residue protein sequence, read N- to C-terminus: MEDLYLSWPKWFSEALARYSSLEGALEGVEEIYYCGMGGSGAAGDYIEALLSIYAPQGPEFRVVKDFRPPRPPRHRGYGLVLASYSGNTLETVECGSLLSPAAGRVVAVTSGGRLLEMAKERGWLVARLPGGILPRVSFPWMLAASTAMLSGALGVDLEALKRLAGGLDTQGLKGEAERLAGFISRYRIASLVTCGPGIPLAVRLKNELAENAKMPSRLEIYPESSHNDIVALEAAEGLYGAVFIWIEHEGSLCPAVLDVVEGIYREYGVDTISIESSARGGPNATVAEYLSRTLVFGLASVRLALMRGFNPEETPPIDKYKRRLGEALRSQA.

One can recognise an SIS domain in the interval 22–160 (LEGALEGVEE…SGALGVDLEA (139 aa)). Residues glycine 39, serine 40, serine 84, serine 86, threonine 89, and arginine 136 each contribute to the D-fructose 6-phosphate site. Residue glutamate 211 is the Proton acceptor of the active site. D-fructose 6-phosphate is bound by residues histidine 227 and lysine 322. Histidine 227 serves as the catalytic Proton donor. Lysine 322 acts as the Proton acceptor in catalysis.

It belongs to the PGI/PMI family. Homodimer.

The catalysed reaction is alpha-D-glucose 6-phosphate = beta-D-fructose 6-phosphate. It carries out the reaction D-mannose 6-phosphate = D-fructose 6-phosphate. With respect to regulation, inhibited by low concentrations of erythrose 4-phosphate and 6-phosphogluconate. In terms of biological role, dual specificity isomerase that catalyzes the isomerization of both glucose-6-phosphate and mannose-6-phosphate to fructose-6-phosphate with similar catalytic efficiency. This is Bifunctional phosphoglucose/phosphomannose isomerase from Aeropyrum pernix (strain ATCC 700893 / DSM 11879 / JCM 9820 / NBRC 100138 / K1).